A 437-amino-acid polypeptide reads, in one-letter code: 3-ketoacyl-CoA thiolase (437 aa).

Cysteine 99 acts as the Acyl-thioester intermediate in catalysis. Residues histidine 392 and cysteine 422 each act as proton acceptor in the active site.

This sequence belongs to the thiolase-like superfamily. Thiolase family. Heterotetramer of two alpha chains (FadJ) and two beta chains (FadI).

It localises to the cytoplasm. The enzyme catalyses an acyl-CoA + acetyl-CoA = a 3-oxoacyl-CoA + CoA. It participates in lipid metabolism; fatty acid beta-oxidation. Its function is as follows. Catalyzes the final step of fatty acid oxidation in which acetyl-CoA is released and the CoA ester of a fatty acid two carbons shorter is formed. The chain is 3-ketoacyl-CoA thiolase from Pectobacterium atrosepticum (strain SCRI 1043 / ATCC BAA-672) (Erwinia carotovora subsp. atroseptica).